The following is a 673-amino-acid chain: DNA ligase (673 aa).

NAD(+)-binding positions include 32 to 36, 81 to 82, and glutamate 111; these read DHVYD and SL. Lysine 113 (N6-AMP-lysine intermediate) is an active-site residue. NAD(+) is bound by residues arginine 134, glutamate 171, lysine 286, and lysine 310. Zn(2+) is bound by residues cysteine 404, cysteine 407, cysteine 422, and cysteine 428. In terms of domain architecture, BRCT spans 595-673; it reads NIIDEYKNKT…NEFWKKDNNF (79 aa).

It belongs to the NAD-dependent DNA ligase family. LigA subfamily. The cofactor is Mg(2+). Mn(2+) serves as cofactor.

The catalysed reaction is NAD(+) + (deoxyribonucleotide)n-3'-hydroxyl + 5'-phospho-(deoxyribonucleotide)m = (deoxyribonucleotide)n+m + AMP + beta-nicotinamide D-nucleotide.. Functionally, DNA ligase that catalyzes the formation of phosphodiester linkages between 5'-phosphoryl and 3'-hydroxyl groups in double-stranded DNA using NAD as a coenzyme and as the energy source for the reaction. It is essential for DNA replication and repair of damaged DNA. The polypeptide is DNA ligase (Ureaplasma urealyticum serovar 10 (strain ATCC 33699 / Western)).